Consider the following 405-residue polypeptide: Accessory Sec system protein translocase subunit SecY2 (405 aa).

10 helical membrane-spanning segments follow: residues 14–34 (MCTL…LPFV), 65–85 (LFSI…MFSF), 104–124 (MYLT…NLPV), 131–151 (FLVF…LVWL), 156–176 (ATIG…ASLP), 190–210 (LGLL…VVLF), 243–263 (GMPY…LLLL), 285–305 (PLWI…FAFV), 343–363 (FALI…LFVL), and 368–388 (LLKV…LFTI).

It belongs to the SecY/SEC61-alpha family. SecY2 subfamily. As to quaternary structure, component of the accessory SecA2/SecY2 protein translocase complex required to export cell wall proteins. May form heterotrimers with SecE and SecG subunits.

The protein localises to the cell membrane. Part of the accessory SecA2/SecY2 system specifically required for export of possible cell wall proteins. The central subunit of a protein translocation channel. This Streptococcus oralis (strain Uo5) protein is Accessory Sec system protein translocase subunit SecY2.